A 488-amino-acid polypeptide reads, in one-letter code: Long chain base biosynthesis protein 2a (488 aa).

Residues 4 to 24 (LPYTTALTTLFSYGLLFAFGQ) traverse the membrane as a helical segment. At Lys-311 the chain carries N6-(pyridoxal phosphate)lysine.

This sequence belongs to the class-II pyridoxal-phosphate-dependent aminotransferase family. In terms of assembly, heterodimer with LCB1. Component of the serine palmitoyltransferase (SPT) complex, composed of LCB1 and LCB2. Requires pyridoxal 5'-phosphate as cofactor.

It is found in the endoplasmic reticulum membrane. The catalysed reaction is L-serine + hexadecanoyl-CoA + H(+) = 3-oxosphinganine + CO2 + CoA. It functions in the pathway lipid metabolism; sphingolipid metabolism. Its function is as follows. Serine palmitoyltransferase (SPT). The heterodimer formed with LCB1 constitutes the catalytic core. The polypeptide is Long chain base biosynthesis protein 2a (Oryza sativa subsp. japonica (Rice)).